We begin with the raw amino-acid sequence, 552 residues long: MDKLNKLAVPAGEKFRKLQKMVHDIKKNESGIINKFKKFQNEQVALICKTGKDTWDRLKKKPPPSLPRRDYASEHADNEEEQWSDDFDSDYENPDGHSDSEMYVVPSEENPDDSYEPPPSEQEKKKIPSSFPISRGEYADNRTSHHQLPPINKPLPSTPSSALPRPKKPSLPSPAAKPKLPLKPRECSDDEDNYIVPVDNDDDNYIEPTESSTPPPAKPPVNRFMKPPAKSALPTPPKPSLASDMQEVYEVPEEEEELSPPPVTRFTKPLPATRAQNAEHSHMHSMTRESPKLDASRNILPLPRNRLHPKTDHEANNNDENHSFSNTQESKFPPGAAPSPLPRALKKTSNAVNPAKPCLPSRDTFTVNEDKPTAADRRRGSSHEFPLPPLPSGTPKSSLQKPLVLPKVPEAPSRALGTSPHSSISSISSTADQDAGVHSKAWYAATCDRKTAEDALYRSNKDGSFLIRKSSGQDSRQPYTLVVFYNRRVYNIPIRFIESTRQYALGREKCGEERFDSVAEIVENHQHTSLVLIDSQNNTKDSTKLKYIVRVS.

Residues 50 to 431 (TGKDTWDRLK…SSISSISSTA (382 aa)) are disordered. The span at 67-76 (PRRDYASEHA) shows a compositional bias: basic and acidic residues. Positions 77 to 93 (DNEEEQWSDDFDSDYEN) are enriched in acidic residues. Residues Tyr91, Tyr103, Tyr115, Tyr194, Tyr205, and Tyr249 each carry the phosphotyrosine; by SYK modification. The span at 188–205 (SDDEDNYIVPVDNDDDNY) shows a compositional bias: acidic residues. 3 stretches are compositionally biased toward basic and acidic residues: residues 277 to 295 (NAEH…KLDA), 309 to 322 (PKTD…DENH), and 368 to 382 (NEDK…RGSS). The 108-residue stretch at 442 to 549 (WYAATCDRKT…KDSTKLKYIV (108 aa)) folds into the SH2 domain.

Associates with PLCG1, VAV1 and NCK1 in a B-cell antigen receptor-dependent fashion. Interacts through its SH2 domain with CD79A. Interacts with VAV3, PLCG2 and GRB2. Following BCR activation, phosphorylated on tyrosine residues by SYK and LYN. When phosphorylated, serves as a scaffold to assemble downstream targets of antigen activation, including PLCG1, VAV1, GRB2 and NCK1. Phosphorylation is required for both Ca(2+) and MAPK signaling pathways. Phosphorylation of Tyr-103, Tyr-194 and Tyr-205 facilitates PLCG1 binding. Phosphorylation of Tyr-115 facilitates BTK binding. Phosphorylation of Tyr-91 facilitates VAV1 and NCK1 binding. As to expression, highly expressed in the bursa, very low expression in ovary and spleen. Expression was variable among B-cell lines. Highly expressed in immature B-cell lines such as DT40 and CL18, low expression was seen in relatively mature B-cell lines, such as 293B9 and 249L4. No expression was seen in T-cell lines.

Its subcellular location is the cytoplasm. It localises to the cell membrane. In terms of biological role, functions as a central linker protein, downstream of the B-cell receptor (BCR), bridging the SYK kinase to a multitude of signaling pathways and regulating biological outcomes of B-cell function and development. Plays a role in the activation of ERK/EPHB2, MAP kinase p38 and JNK. Modulates AP1 activation. Important for the activation of NF-kappa-B and NFAT. Plays an important role in BCR-mediated PLCG1 and PLCG2 activation and Ca(2+) mobilization and is required for trafficking of the BCR to late endosomes. However, does not seem to be required for pre-BCR-mediated activation of MAP kinase and phosphatidyl-inositol 3 (PI3) kinase signaling. May be required for the RAC1-JNK pathway. Plays a critical role in orchestrating the pro-B cell to pre-B cell transition. Plays a critical role in B-cell development in the bursa. Plays an important role in BCR-induced apoptosis. The polypeptide is B-cell linker protein (BLNK) (Gallus gallus (Chicken)).